Reading from the N-terminus, the 250-residue chain is Putative B3 domain-containing protein At4g03170 (250 aa).

Residues 1-12 (MANSTGKPTSST) are compositionally biased toward polar residues. A disordered region spans residues 1 to 90 (MANSTGKPTS…EKNQPKRFKK (90 aa)). Acidic residues predominate over residues 34 to 56 (DREEDIDDEDDIDDEVIDDEDYE). A compositionally biased stretch (basic and acidic residues) spans 72 to 84 (QSREREEETEKNQ). The segment at residues 137–245 (KKQLMSSDVD…KLCFAIHYVK (109 aa)) is a DNA-binding region (TF-B3).

The protein localises to the nucleus. The chain is Putative B3 domain-containing protein At4g03170 from Arabidopsis thaliana (Mouse-ear cress).